A 237-amino-acid chain; its full sequence is Phosphoribosylaminoimidazole-succinocarboxamide synthase (237 aa).

It belongs to the SAICAR synthetase family.

The catalysed reaction is 5-amino-1-(5-phospho-D-ribosyl)imidazole-4-carboxylate + L-aspartate + ATP = (2S)-2-[5-amino-1-(5-phospho-beta-D-ribosyl)imidazole-4-carboxamido]succinate + ADP + phosphate + 2 H(+). It participates in purine metabolism; IMP biosynthesis via de novo pathway; 5-amino-1-(5-phospho-D-ribosyl)imidazole-4-carboxamide from 5-amino-1-(5-phospho-D-ribosyl)imidazole-4-carboxylate: step 1/2. This chain is Phosphoribosylaminoimidazole-succinocarboxamide synthase, found in Deinococcus deserti (strain DSM 17065 / CIP 109153 / LMG 22923 / VCD115).